We begin with the raw amino-acid sequence, 304 residues long: Non-specific ribonucleoside hydrolase RihC (304 aa).

The active site involves His-233.

Belongs to the IUNH family. RihC subfamily.

In terms of biological role, hydrolyzes both purine and pyrimidine ribonucleosides with a broad-substrate specificity. The protein is Non-specific ribonucleoside hydrolase RihC of Shigella sonnei (strain Ss046).